The chain runs to 382 residues: ATP phosphoribosyltransferase regulatory subunit (382 aa).

It belongs to the class-II aminoacyl-tRNA synthetase family. HisZ subfamily. In terms of assembly, heteromultimer composed of HisG and HisZ subunits.

The protein resides in the cytoplasm. The protein operates within amino-acid biosynthesis; L-histidine biosynthesis; L-histidine from 5-phospho-alpha-D-ribose 1-diphosphate: step 1/9. Functionally, required for the first step of histidine biosynthesis. May allow the feedback regulation of ATP phosphoribosyltransferase activity by histidine. The polypeptide is ATP phosphoribosyltransferase regulatory subunit (Burkholderia cenocepacia (strain HI2424)).